Reading from the N-terminus, the 59-residue chain is UPF0434 protein PBPRA2383 (59 aa).

Belongs to the UPF0434 family.

This chain is UPF0434 protein PBPRA2383, found in Photobacterium profundum (strain SS9).